The following is a 191-amino-acid chain: Imidazoleglycerol-phosphate dehydratase (191 aa).

This sequence belongs to the imidazoleglycerol-phosphate dehydratase family.

It localises to the cytoplasm. The enzyme catalyses D-erythro-1-(imidazol-4-yl)glycerol 3-phosphate = 3-(imidazol-4-yl)-2-oxopropyl phosphate + H2O. Its pathway is amino-acid biosynthesis; L-histidine biosynthesis; L-histidine from 5-phospho-alpha-D-ribose 1-diphosphate: step 6/9. The protein is Imidazoleglycerol-phosphate dehydratase of Methanosarcina mazei (strain ATCC BAA-159 / DSM 3647 / Goe1 / Go1 / JCM 11833 / OCM 88) (Methanosarcina frisia).